Here is a 434-residue protein sequence, read N- to C-terminus: Probable proline transporter 2 (434 aa).

Transmembrane regions (helical) follow at residues 26–46, 49–69, 106–126, 149–169, 171–191, 213–233, 251–271, 297–317, 339–359, 362–382, and 403–423; these read PWYQ…VLGY, SVMV…AAAI, LTWA…IILA, IALS…LSAL, IWLG…FVLS, IFTT…GMLP, LWFQ…MGYW, LSAF…MYEF, VGVR…LPFL, FMSL…ANHM, and VAGF…LIMV.

It belongs to the amino acid/polyamine transporter 2 family. Amino acid/auxin permease (AAAP) (TC 2.A.18.3) subfamily.

It is found in the cell membrane. Proline transporter that mediates proline transport across the plasma membrane. The chain is Probable proline transporter 2 from Oryza sativa subsp. japonica (Rice).